A 560-amino-acid chain; its full sequence is Probable 2,3-bisphosphoglycerate-independent phosphoglycerate mutase 2 (560 aa).

An N-acetylglycine modification is found at Gly2. Positions 29 and 82 each coordinate Mn(2+). Catalysis depends on Ser82, which acts as the Phosphoserine intermediate. Residues His141, 171-172, Arg207, Arg214, 287-290, and Lys362 each bind substrate; these read RD and RADR. Mn(2+) contacts are provided by Asp431, His435, Asp472, His473, and His502.

It belongs to the BPG-independent phosphoglycerate mutase family. In terms of assembly, monomer. Mn(2+) serves as cofactor.

The protein localises to the cytoplasm. The enzyme catalyses (2R)-2-phosphoglycerate = (2R)-3-phosphoglycerate. Its pathway is carbohydrate degradation; glycolysis; pyruvate from D-glyceraldehyde 3-phosphate: step 3/5. In terms of biological role, catalyzes the interconversion of 2-phosphoglycerate (2-PGA) and 3-phosphoglycerate (3-PGA). Required for guard cell function (e.g. blue light-, abscisic acid- (ABA), and low CO(2)-regulated stomatal movements) and fertility (e.g. pollen grains production). In Arabidopsis thaliana (Mouse-ear cress), this protein is Probable 2,3-bisphosphoglycerate-independent phosphoglycerate mutase 2 (PGM2).